Here is a 319-residue protein sequence, read N- to C-terminus: Eukaryotic translation initiation factor 3 subunit H (319 aa).

In terms of domain architecture, MPN spans 19–153 (VQIDGLVVLK…LKCYRLTQSF (135 aa)).

It belongs to the eIF-3 subunit H family. In terms of assembly, component of the eukaryotic translation initiation factor 3 (eIF-3) complex.

The protein localises to the cytoplasm. In terms of biological role, component of the eukaryotic translation initiation factor 3 (eIF-3) complex, which is involved in protein synthesis of a specialized repertoire of mRNAs and, together with other initiation factors, stimulates binding of mRNA and methionyl-tRNAi to the 40S ribosome. The eIF-3 complex specifically targets and initiates translation of a subset of mRNAs involved in cell proliferation. In Dictyostelium discoideum (Social amoeba), this protein is Eukaryotic translation initiation factor 3 subunit H (eif3H).